A 147-amino-acid polypeptide reads, in one-letter code: Large ribosomal subunit protein bL9 (147 aa).

The protein belongs to the bacterial ribosomal protein bL9 family.

In terms of biological role, binds to the 23S rRNA. This is Large ribosomal subunit protein bL9 from Halalkalibacterium halodurans (strain ATCC BAA-125 / DSM 18197 / FERM 7344 / JCM 9153 / C-125) (Bacillus halodurans).